A 257-amino-acid chain; its full sequence is Uracil phosphoribosyltransferase (257 aa).

Residues Arg77, Arg102, and 129–137 each bind 5-phospho-alpha-D-ribose 1-diphosphate; that span reads DPMLATGGS. Residues Ile192 and 197–199 each bind uracil; that span reads GDA. Asp198 serves as a coordination point for 5-phospho-alpha-D-ribose 1-diphosphate. The tract at residues 203-257 is disordered; the sequence is QFGPNLFTSSAPSRPEAPAGRGRAAAKTPGRRSARSESPSSTSPSARSRKAAPPA. 2 stretches are compositionally biased toward low complexity: residues 211–230 and 238–248; these read SSAP…AAKT and SESPSSTSPSA.

It belongs to the UPRTase family. Mg(2+) is required as a cofactor.

The enzyme catalyses UMP + diphosphate = 5-phospho-alpha-D-ribose 1-diphosphate + uracil. It participates in pyrimidine metabolism; UMP biosynthesis via salvage pathway; UMP from uracil: step 1/1. Its activity is regulated as follows. Allosterically activated by GTP. In terms of biological role, catalyzes the conversion of uracil and 5-phospho-alpha-D-ribose 1-diphosphate (PRPP) to UMP and diphosphate. This chain is Uracil phosphoribosyltransferase, found in Mycolicibacterium paratuberculosis (strain ATCC BAA-968 / K-10) (Mycobacterium paratuberculosis).